We begin with the raw amino-acid sequence, 699 residues long: Polyribonucleotide nucleotidyltransferase (699 aa).

The Mg(2+) site is built by Asp485 and Asp491. The KH domain maps to Pro552–Ile611. The S1 motif domain occupies Gly621–Lys689.

The protein belongs to the polyribonucleotide nucleotidyltransferase family. Component of the RNA degradosome, which is a multiprotein complex involved in RNA processing and mRNA degradation. Mg(2+) is required as a cofactor.

The protein resides in the cytoplasm. It catalyses the reaction RNA(n+1) + phosphate = RNA(n) + a ribonucleoside 5'-diphosphate. In terms of biological role, involved in mRNA degradation. Catalyzes the phosphorolysis of single-stranded polyribonucleotides processively in the 3'- to 5'-direction. This is Polyribonucleotide nucleotidyltransferase from Shewanella amazonensis (strain ATCC BAA-1098 / SB2B).